A 638-amino-acid chain; its full sequence is Phosphomethylpyrimidine synthase (638 aa).

Substrate contacts are provided by residues Asn-236, Met-265, Tyr-294, His-330, 350-352, 391-394, and Glu-430; these read SRG and DGLR. Residue His-434 coordinates Zn(2+). Tyr-457 serves as a coordination point for substrate. His-498 is a binding site for Zn(2+). [4Fe-4S] cluster is bound by residues Cys-578, Cys-581, and Cys-586.

It belongs to the ThiC family. Homodimer. The cofactor is [4Fe-4S] cluster.

It catalyses the reaction 5-amino-1-(5-phospho-beta-D-ribosyl)imidazole + S-adenosyl-L-methionine = 4-amino-2-methyl-5-(phosphooxymethyl)pyrimidine + CO + 5'-deoxyadenosine + formate + L-methionine + 3 H(+). The protein operates within cofactor biosynthesis; thiamine diphosphate biosynthesis. Functionally, catalyzes the synthesis of the hydroxymethylpyrimidine phosphate (HMP-P) moiety of thiamine from aminoimidazole ribotide (AIR) in a radical S-adenosyl-L-methionine (SAM)-dependent reaction. The protein is Phosphomethylpyrimidine synthase of Polaromonas sp. (strain JS666 / ATCC BAA-500).